A 200-amino-acid polypeptide reads, in one-letter code: NAD(P)H dehydrogenase (quinone) (200 aa).

One can recognise a Flavodoxin-like domain in the interval 7-199 (LAIVFYSSTG…RQVELTAKLL (193 aa)). Residues 13–18 (SSTGTG), 86–88 (TRF), 121–127 (SAQNVNG), and H142 each bind FMN.

Belongs to the WrbA family. Homotetramer. Requires FMN as cofactor.

It catalyses the reaction a quinone + NADH + H(+) = a quinol + NAD(+). It carries out the reaction a quinone + NADPH + H(+) = a quinol + NADP(+). This Deinococcus radiodurans (strain ATCC 13939 / DSM 20539 / JCM 16871 / CCUG 27074 / LMG 4051 / NBRC 15346 / NCIMB 9279 / VKM B-1422 / R1) protein is NAD(P)H dehydrogenase (quinone).